Reading from the N-terminus, the 203-residue chain is Ras-like protein family member 10A (203 aa).

Residues 1-203 (MGGSLRVAVL…ALHPARCSLM (203 aa)) form a small GTPase-like region. A GTP-binding site is contributed by 11 to 18 (GAPGVGKT). An Effector region motif is present at residues 33–42 (HRPTDGPRLY). Residues 59–62 (DGDV) and 129–132 (NKRD) contribute to the GTP site. Cysteine methyl ester is present on C200. C200 carries the S-farnesyl cysteine lipid modification. A propeptide spans 201–203 (SLM) (removed in mature form).

Belongs to the small GTPase superfamily. Ras family. Post-translationally, isoprenylation is essential for nucleolar localization, and the proliferation-inhibiting activity of RASL10A. Expression appears to be strictly limited to the central nervous system.

It is found in the cell membrane. It localises to the nucleus. The protein localises to the nucleolus. It carries out the reaction GTP + H2O = GDP + phosphate + H(+). Potent inhibitor of cellular proliferation. This chain is Ras-like protein family member 10A (RASL10A), found in Homo sapiens (Human).